The chain runs to 190 residues: Segregation and condensation protein B (190 aa).

This sequence belongs to the ScpB family. As to quaternary structure, homodimer. Homodimerization may be required to stabilize the binding of ScpA to the Smc head domains. Component of a cohesin-like complex composed of ScpA, ScpB and the Smc homodimer, in which ScpA and ScpB bind to the head domain of Smc. The presence of the three proteins is required for the association of the complex with DNA.

Its subcellular location is the cytoplasm. Its function is as follows. Participates in chromosomal partition during cell division. May act via the formation of a condensin-like complex containing Smc and ScpA that pull DNA away from mid-cell into both cell halves. This is Segregation and condensation protein B from Ruminiclostridium cellulolyticum (strain ATCC 35319 / DSM 5812 / JCM 6584 / H10) (Clostridium cellulolyticum).